The chain runs to 186 residues: Intraflagellar transport protein 27 homolog (186 aa).

GTP is bound by residues 12–19 (GDPTVGKT), 64–68 (DSAGK), and 123–126 (NKTD).

This sequence belongs to the small GTPase superfamily. Rab family. As to quaternary structure, component of the IFT complex B, at least composed of IFT20, IFT22, IFT25, IFT27, IFT46, IFT52, TRAF3IP1/IFT54, IFT57, IFT74, IFT80, IFT81, and IFT88. Interacts with IFT25. Interacts with IFT70B. Interacts with RABL2/RABL2A; binding is equal in the presence of GTP or GDP. Interacts with IFT88. Interacts with ARL6; recognizes and binds with the GTP-free form of ARL6.

Its subcellular location is the cell projection. The protein resides in the cilium. The protein localises to the cytoplasm. It localises to the flagellum. Small GTPase-like component of the intraflagellar transport (IFT) complex B that promotes the exit of the BBSome complex from cilia via its interaction with ARL6. Not involved in entry of the BBSome complex into cilium. Prevents aggregation of GTP-free ARL6. Required for hedgehog signaling. Forms a subcomplex within the IFT complex B with IFT25. Its role in intraflagellar transport is mainly seen in tissues rich in ciliated cells such as kidney and testis. Essential for male fertility, spermiogenesis and sperm flagella formation. Plays a role in the early development of the kidney. May be involved in the regulation of ureteric bud initiation. The sequence is that of Intraflagellar transport protein 27 homolog (IFT27) from Bos taurus (Bovine).